An 869-amino-acid polypeptide reads, in one-letter code: Leucine--tRNA ligase (869 aa).

Residues 42 to 52 (PYPSGKLHMGH) carry the 'HIGH' region motif. Residues 624–628 (TMSKS) carry the 'KMSKS' region motif. Lys-627 lines the ATP pocket.

Belongs to the class-I aminoacyl-tRNA synthetase family.

Its subcellular location is the cytoplasm. It carries out the reaction tRNA(Leu) + L-leucine + ATP = L-leucyl-tRNA(Leu) + AMP + diphosphate. The protein is Leucine--tRNA ligase of Nitrosomonas europaea (strain ATCC 19718 / CIP 103999 / KCTC 2705 / NBRC 14298).